The following is a 504-amino-acid chain: Cytochrome P450 3A41 (504 aa).

Cysteine 443 contributes to the heme binding site.

It belongs to the cytochrome P450 family. Heme serves as cofactor. Expressed in liver. Also expressed in the kidneys of female mice, with traces in the stomach, ovary, and heart of female mice and in the testis of male mice.

It localises to the endoplasmic reticulum membrane. The protein localises to the microsome membrane. It carries out the reaction an organic molecule + reduced [NADPH--hemoprotein reductase] + O2 = an alcohol + oxidized [NADPH--hemoprotein reductase] + H2O + H(+). The sequence is that of Cytochrome P450 3A41 (Cyp3a41a) from Mus musculus (Mouse).